The primary structure comprises 409 residues: Glucan endo-1,6-beta-glucosidase B (409 aa).

The N-terminal stretch at 1–16 (MKFILPLFTSLPVALA) is a signal peptide. N-linked (GlcNAc...) asparagine glycosylation occurs at Asn-35. Residue Glu-228 is the Proton donor of the active site. Catalysis depends on Glu-330, which acts as the Nucleophile.

This sequence belongs to the glycosyl hydrolase 5 (cellulase A) family.

Its subcellular location is the secreted. It carries out the reaction Random hydrolysis of (1-&gt;6)-linkages in (1-&gt;6)-beta-D-glucans.. Beta-glucanases participate in the metabolism of beta-glucan, the main structural component of the cell wall. Acts on lutean, pustulan and 1,6-oligo-beta-D-glucosides. The polypeptide is Glucan endo-1,6-beta-glucosidase B (exgB) (Emericella nidulans (strain FGSC A4 / ATCC 38163 / CBS 112.46 / NRRL 194 / M139) (Aspergillus nidulans)).